Reading from the N-terminus, the 431-residue chain is MARGQPRRSEEQWTALQNRTECKTKIKLTRCGKITLGILTAVLAAVLIGLIAYFAACGKDSFYYHVSFKVNNIDYDSKFAKPYSQEYMDLNKRIVSLMNETFHESKLRKQYVKAHTVQVSKAKGKVVIHAVLKFKACYRNNVEKYWESVETTLYQKLKGQTGLLIDSSSFKFSDIAMPIAEDLLNTCCGRRTIIHRGHKVAGGQDAEEGEWPWQASLQQNSVHRCGATLISNYWLITAAHCFIRAANPKDWKVSFGFLLSKPQAPRAVKNIIIHENYSYPAHDNDIAVVRLSSPVLYESNIRRACLPEATQKFPPNSDVVVTGWGTLKSDGDSPNILQKGKVKIIDNKTCNSGKAYGGMITPGMMCAGFLKGRVDACQGDSGGPLVSEDSKGIWFLAGIVSWGDECALPNKPGVYTRVTYYRDWITSKTGL.

Topologically, residues 1-33 (MARGQPRRSEEQWTALQNRTECKTKIKLTRCGK) are cytoplasmic. Residues 34–54 (ITLGILTAVLAAVLIGLIAYF) form a helical; Signal-anchor for type II membrane protein membrane-spanning segment. Topologically, residues 55 to 431 (AACGKDSFYY…RDWITSKTGL (377 aa)) are extracellular. One can recognise an SEA domain in the interval 60-177 (DSFYYHVSFK…SSFKFSDIAM (118 aa)). N-linked (GlcNAc...) asparagine glycosylation is present at Asn-99. In terms of domain architecture, Peptidase S1 spans 200-430 (VAGGQDAEEG…YRDWITSKTG (231 aa)). Cys-225 and Cys-241 are disulfide-bonded. His-240 (charge relay system) is an active-site residue. Asn-276 is a glycosylation site (N-linked (GlcNAc...) asparagine). The Charge relay system role is filled by Asp-285. Residue Asn-347 is glycosylated (N-linked (GlcNAc...) asparagine). Intrachain disulfides connect Cys-350–Cys-366 and Cys-377–Cys-406. Ser-381 serves as the catalytic Charge relay system.

This sequence belongs to the peptidase S1 family. Proteolytically cleaved via an autocatalytic mechanism. Expressed specifically in Purkinje neurons of the cerebellum (at protein level). Also detected in spinal cord.

It is found in the cell membrane. The protein resides in the cell projection. The protein localises to the dendrite. It localises to the perikaryon. Serine protease which has a preference for Arg or Lys in position P1 and uncharged residues in positions P2 and P3. Shows specificity towards FGF2 in vitro. The polypeptide is Transmembrane protease serine 11C (Mus musculus (Mouse)).